The following is a 278-amino-acid chain: Chitosanase (278 aa).

An N-terminal signal peptide occupies residues 1-40 (MHSQHRTARIALAVVLTAIPASLATAGVGYASTQASTAVK). Glutamate 62 (proton donor) is an active-site residue. Catalysis depends on aspartate 80, which acts as the Nucleophile.

This sequence belongs to the glycosyl hydrolase 46 family.

The protein resides in the secreted. It catalyses the reaction Endohydrolysis of beta-(1-&gt;4)-linkages between D-glucosamine residues in a partly acetylated chitosan.. In terms of biological role, aids in the defense against invading fungal pathogens by degrading their cell wall chitosan. The chain is Chitosanase (csn) from Streptomyces sp. (strain N174).